The primary structure comprises 685 residues: Ubiquitin carboxyl-terminal hydrolase BAP1 (685 aa).

Positions 4–235 (GWLELESDPG…IRFNLMAVVP (232 aa)) constitute a UCH catalytic domain. The active-site Nucleophile is Cys91. His169 serves as the catalytic Proton donor. Disordered regions lie at residues 273-325 (AQKP…RGPV), 363-425 (MQEE…PGVL), 440-493 (LSIK…SSPV), and 550-579 (KVSP…EVPQ). Acidic residues predominate over residues 385 to 394 (DTDEEEEEET). Over residues 450-493 (PHSQPSPTPSNESTDTASEIGSAFNSPLRSPLRSANPTRPSSPV) the composition is skewed to polar residues. Residues 556 to 574 (NKVEEPRESSEPDTERSRV) are compositionally biased toward basic and acidic residues. In terms of domain architecture, ULD spans 626-654 (NYDEFICAFISMLAQEGMLASLVEQNISV). Residues 659-685 (GVSIGRLHKQRKPDRRKRSRPYKAKRQ) form a disordered region. The Nuclear localization signal signature appears at 673–678 (RRKRSR).

This sequence belongs to the peptidase C12 family. BAP1 subfamily. Component of the PR-DUB complex.

It localises to the cytoplasm. The protein resides in the nucleus. It catalyses the reaction Thiol-dependent hydrolysis of ester, thioester, amide, peptide and isopeptide bonds formed by the C-terminal Gly of ubiquitin (a 76-residue protein attached to proteins as an intracellular targeting signal).. Deubiquitinating enzyme that plays a key role in chromatin by mediating deubiquitination of histone H2A. Catalytic component of the PR-DUB complex, a complex that specifically mediates deubiquitination of histone H2A monoubiquitinated at 'Lys-119' (H2AK119ub1). The protein is Ubiquitin carboxyl-terminal hydrolase BAP1 (bap1) of Xenopus tropicalis (Western clawed frog).